A 103-amino-acid chain; its full sequence is Histone H4 (103 aa).

An N6-acetyl-N6-methyllysine; alternate modification is found at K6. Residues K6, K9, and K13 each carry the N6-methyllysine; alternate modification. An N6-acetyl-N6-methyllysine; alternate modification is found at K13. A DNA-binding region spans residues 17–21 (KRHRK). The residue at position 92 (K92) is an N6-glutaryllysine.

This sequence belongs to the histone H4 family. As to quaternary structure, the nucleosome is a histone octamer containing two molecules each of H2A, H2B, H3 and H4 assembled in one H3-H4 heterotetramer and two H2A-H2B heterodimers. The octamer wraps approximately 147 bp of DNA. Glutarylation at Lys-92 (H4K91glu) destabilizes nucleosomes by promoting dissociation of the H2A-H2B dimers from nucleosomes.

It is found in the nucleus. Its subcellular location is the chromosome. Functionally, core component of nucleosome. Nucleosomes wrap and compact DNA into chromatin, limiting DNA accessibility to the cellular machineries which require DNA as a template. Histones thereby play a central role in transcription regulation, DNA repair, DNA replication and chromosomal stability. DNA accessibility is regulated via a complex set of post-translational modifications of histones, also called histone code, and nucleosome remodeling. The protein is Histone H4 (H4.1) of Mortierella alpina (Oleaginous fungus).